Reading from the N-terminus, the 178-residue chain is dCTP deaminase (178 aa).

DCTP contacts are provided by residues 99-104 (RSTWAR) and D115. The Proton donor/acceptor role is filled by E125. Residues Y157 and Q164 each coordinate dCTP.

This sequence belongs to the dCTP deaminase family. Homotrimer.

The enzyme catalyses dCTP + H2O + H(+) = dUTP + NH4(+). Its pathway is pyrimidine metabolism; dUMP biosynthesis; dUMP from dCTP (dUTP route): step 1/2. Functionally, catalyzes the deamination of dCTP to dUTP. The polypeptide is dCTP deaminase (Aeropyrum pernix (strain ATCC 700893 / DSM 11879 / JCM 9820 / NBRC 100138 / K1)).